Reading from the N-terminus, the 419-residue chain is Tyrosine--tRNA ligase 1 (419 aa).

Position 35 (tyrosine 35) interacts with L-tyrosine. The 'HIGH' region motif lies at proline 40–histidine 49. Tyrosine 172 and glutamine 176 together coordinate L-tyrosine. The 'KMSKS' region motif lies at lysine 232–threonine 236. Residue lysine 235 coordinates ATP. Residues glutamine 353 to alanine 418 form the S4 RNA-binding domain.

It belongs to the class-I aminoacyl-tRNA synthetase family. TyrS type 1 subfamily. In terms of assembly, homodimer.

Its subcellular location is the cytoplasm. The enzyme catalyses tRNA(Tyr) + L-tyrosine + ATP = L-tyrosyl-tRNA(Tyr) + AMP + diphosphate + H(+). Its function is as follows. Catalyzes the attachment of tyrosine to tRNA(Tyr) in a two-step reaction: tyrosine is first activated by ATP to form Tyr-AMP and then transferred to the acceptor end of tRNA(Tyr). In Vibrio parahaemolyticus serotype O3:K6 (strain RIMD 2210633), this protein is Tyrosine--tRNA ligase 1.